The sequence spans 496 residues: Probable zinc metalloprotease SNOG_06590 (496 aa).

The first 20 residues, M1–S20, serve as a signal peptide directing secretion. N-linked (GlcNAc...) asparagine glycosylation occurs at N138. 3 residues coordinate Zn(2+): H161, D181, and E226. Residue N241 is glycosylated (N-linked (GlcNAc...) asparagine). D253 is a binding site for Zn(2+). 5 N-linked (GlcNAc...) asparagine glycosylation sites follow: N282, N361, N409, N415, and N457. The Fibronectin type-III domain occupies E402 to C496.

It belongs to the peptidase M28 family. M28B subfamily. It depends on Zn(2+) as a cofactor.

Its subcellular location is the secreted. This is Probable zinc metalloprotease SNOG_06590 from Phaeosphaeria nodorum (strain SN15 / ATCC MYA-4574 / FGSC 10173) (Glume blotch fungus).